The chain runs to 468 residues: Phosphoglucosamine mutase (468 aa).

Ser112 functions as the Phosphoserine intermediate in the catalytic mechanism. Mg(2+) contacts are provided by Ser112, Asp254, Asp256, and Asp258. Ser112 is modified (phosphoserine).

This sequence belongs to the phosphohexose mutase family. Mg(2+) is required as a cofactor. Activated by phosphorylation.

The enzyme catalyses alpha-D-glucosamine 1-phosphate = D-glucosamine 6-phosphate. Functionally, catalyzes the conversion of glucosamine-6-phosphate to glucosamine-1-phosphate. This chain is Phosphoglucosamine mutase, found in Prochlorococcus marinus (strain MIT 9303).